We begin with the raw amino-acid sequence, 189 residues long: CASP-like protein 1U2 (189 aa).

Residues 1-24 (MFGSDDSGCHVMDDDVAPPANGSK) lie on the Cytoplasmic side of the membrane. Residues 25-45 (AVTLLLRLITLALALTSAVLM) traverse the membrane as a helical segment. Topologically, residues 46–71 (ATASECTIYGLDGATATTVTFKDYQP) are extracellular. Residues 72-92 (FIYLVGSNIAATILEVAAIYV) traverse the membrane as a helical segment. Residues 93–109 (QVGKGDDVEDAPMIPRV) are Cytoplasmic-facing. Residues 110 to 130 (VLVVVDVAVQMLLYSATGAVF) traverse the membrane as a helical segment. Residues 131-158 (AAVMAYGPQISACTGAAGHFCEQVQRSK) lie on the Extracellular side of the membrane. The helical transmembrane segment at 159–179 (IISLAASLSAVLAAVAKDVAL) threads the bilayer. Topologically, residues 180–189 (PCSVWPHPSS) are cytoplasmic.

The protein belongs to the Casparian strip membrane proteins (CASP) family. Homodimer and heterodimers.

It localises to the cell membrane. In Sorghum bicolor (Sorghum), this protein is CASP-like protein 1U2.